Here is a 435-residue protein sequence, read N- to C-terminus: Exopolysaccharide production protein ExoQ (435 aa).

The next 10 helical transmembrane spans lie at 11–31, 35–55, 65–85, 117–137, 156–176, 178–198, 203–223, 230–250, 325–345, and 361–381; these read PGAN…VFAY, FGQV…LVDY, YLWI…SAAP, GMIA…TYHY, LGFY…VLGE, GLWM…LLTS, SVLT…ITAL, LLFI…IYAG, VVET…TAFF, and MVLF…IDIL.

The protein localises to the cell membrane. It functions in the pathway glycan metabolism; exopolysaccharide biosynthesis. Its function is as follows. Involved in the production of exopolysaccharide. This chain is Exopolysaccharide production protein ExoQ (exoQ), found in Rhizobium meliloti (strain 1021) (Ensifer meliloti).